A 315-amino-acid polypeptide reads, in one-letter code: Olfactory receptor 8J2 (315 aa).

Residues 1–24 (MASGNLTWVTEFILVGVSDDPELQ) are Extracellular-facing. N-linked (GlcNAc...) asparagine glycosylation occurs at Asn-5. Residues 25-45 (IPLFLVFLVLYLLTVAGNLGI) traverse the membrane as a helical segment. The Cytoplasmic segment spans residues 46–57 (ITLTSVDPQLQT). A helical transmembrane segment spans residues 58 to 78 (PMYFFLRHLAIINLCNSTVVA). The Extracellular segment spans residues 79 to 97 (PKMLVNFLVTKKTISYYGC). A disulfide bridge links Cys-97 with Cys-179. A helical transmembrane segment spans residues 98–118 (AAQLGGFLVFIVAEIFTLAAM). Over 119 to 143 (AYDRYVAIWSPLLYAVVVSPKVCRL) the chain is Cytoplasmic. A helical transmembrane segment spans residues 144–164 (LVSLTYLQSLITALTVSSCVF). Residues 165 to 205 (SVSYCSSNIINHFYCDDVPLLALSCSDTYIPETAVFIFSGT) are Extracellular-facing. A helical transmembrane segment spans residues 206-226 (NLLFSMIVVLISYFNIVITIL). Residues 227–239 (RIRSSEGRQKAFS) lie on the Cytoplasmic side of the membrane. Residues 240 to 260 (TCASHMIAVVVFYGTLLFMYL) traverse the membrane as a helical segment. Residues 261-271 (QPRSNHSLDTD) lie on the Extracellular side of the membrane. N-linked (GlcNAc...) asparagine glycosylation is present at Asn-265. The chain crosses the membrane as a helical span at residues 272–292 (KMASVFYTLVIPVLNPLIYSL). The Cytoplasmic portion of the chain corresponds to 293 to 315 (RNKNVKDALKRFLDNPCRSLKLM).

Belongs to the G-protein coupled receptor 1 family.

It localises to the membrane. Its function is as follows. Odorant receptor. The polypeptide is Olfactory receptor 8J2 (OR8J2) (Homo sapiens (Human)).